Consider the following 248-residue polypeptide: 3-deoxy-manno-octulosonate cytidylyltransferase (248 aa).

It belongs to the KdsB family.

The protein localises to the cytoplasm. It catalyses the reaction 3-deoxy-alpha-D-manno-oct-2-ulosonate + CTP = CMP-3-deoxy-beta-D-manno-octulosonate + diphosphate. It participates in nucleotide-sugar biosynthesis; CMP-3-deoxy-D-manno-octulosonate biosynthesis; CMP-3-deoxy-D-manno-octulosonate from 3-deoxy-D-manno-octulosonate and CTP: step 1/1. It functions in the pathway bacterial outer membrane biogenesis; lipopolysaccharide biosynthesis. In terms of biological role, activates KDO (a required 8-carbon sugar) for incorporation into bacterial lipopolysaccharide in Gram-negative bacteria. This chain is 3-deoxy-manno-octulosonate cytidylyltransferase, found in Enterobacter sp. (strain 638).